The chain runs to 78 residues: UPF0270 protein YE3952 (78 aa).

This sequence belongs to the UPF0270 family.

This Yersinia enterocolitica serotype O:8 / biotype 1B (strain NCTC 13174 / 8081) protein is UPF0270 protein YE3952.